Consider the following 321-residue polypeptide: Lipoyl synthase (321 aa).

Residues Cys-68, Cys-73, Cys-79, Cys-94, Cys-98, Cys-101, and Ser-308 each contribute to the [4Fe-4S] cluster site. Residues 80–297 enclose the Radical SAM core domain; that stretch reads FNHGTATFMI…KAIALDLGFT (218 aa).

It belongs to the radical SAM superfamily. Lipoyl synthase family. The cofactor is [4Fe-4S] cluster.

The protein localises to the cytoplasm. The catalysed reaction is [[Fe-S] cluster scaffold protein carrying a second [4Fe-4S](2+) cluster] + N(6)-octanoyl-L-lysyl-[protein] + 2 oxidized [2Fe-2S]-[ferredoxin] + 2 S-adenosyl-L-methionine + 4 H(+) = [[Fe-S] cluster scaffold protein] + N(6)-[(R)-dihydrolipoyl]-L-lysyl-[protein] + 4 Fe(3+) + 2 hydrogen sulfide + 2 5'-deoxyadenosine + 2 L-methionine + 2 reduced [2Fe-2S]-[ferredoxin]. Its pathway is protein modification; protein lipoylation via endogenous pathway; protein N(6)-(lipoyl)lysine from octanoyl-[acyl-carrier-protein]: step 2/2. Catalyzes the radical-mediated insertion of two sulfur atoms into the C-6 and C-8 positions of the octanoyl moiety bound to the lipoyl domains of lipoate-dependent enzymes, thereby converting the octanoylated domains into lipoylated derivatives. The polypeptide is Lipoyl synthase (Tolumonas auensis (strain DSM 9187 / NBRC 110442 / TA 4)).